Consider the following 245-residue polypeptide: Syntaxin-61 (245 aa).

The Cytoplasmic segment spans residues 1–224; that stretch reads MSSAQDPFYI…VMKKAGAKGQ (224 aa). The 63-residue stretch at 153–215 folds into the t-SNARE coiled-coil homology domain; the sequence is MLLIKQQDEE…EFVQKKVGMV (63 aa). A helical; Anchor for type IV membrane protein transmembrane segment spans residues 225–245; the sequence is MMMICFLLVLFIILFVLVFLT.

This sequence belongs to the syntaxin family. In terms of assembly, interacts with VTI12 and either SYP41, SYP42 or SYP51 in the trans-Golgi network or with VTI11 and SYP51 in the prevacuolar compartment to form t-SNARE complexes. Core constituent of the SNARE complex required for membrane fusion at the trans-Golgi network. Also observed in the SYP121-complex and cellulose synthases. Colocalizes with PIP2-7 and SYP121 in trafficking vesicles and at the plasma membrane. Interacts with SYP121 and PIP2-7. In terms of tissue distribution, expressed in root, leaf, stem, flower and silique, but not in hypocotyl or young leaf. Strong expression in the vasculature and in guard cells of the leaf epidermis.

It is found in the golgi apparatus. It localises to the trans-Golgi network membrane. Its subcellular location is the prevacuolar compartment membrane. In terms of biological role, vesicle trafficking protein that functions in the secretory pathway; the fusion of phospholipid vesicles containing SYP61 and VTI12 is triggered by YKT61 and YKT62. Together with VTI12, required for membrane fusion. Involved in osmotic stress tolerance and in abscisic acid (ABA) regulation of stomatal responses. Plays a role in the exocytic trafficking of cellulose synthases (CESAs) and the transport of cell wall components to the plasma membrane. Together with SYP121, regulates the post-Golgi trafficking of the aquaporin PIP2-7 to the plasma membrane, thus modulating cell membrane water permeability. This is Syntaxin-61 from Arabidopsis thaliana (Mouse-ear cress).